The primary structure comprises 618 residues: Glucose starvation modulator protein 1 (618 aa).

A DNA-binding region (zn(2)-C6 fungal-type) is located at residues 20–48; sequence CEFCHTKHIQCDVGRPCQNCLKRNIGKFC. The disordered stretch occupies residues 325–352; the sequence is ANANTHPSHNAKLESECDSSSHSDADLE. Positions 335-352 are enriched in basic and acidic residues; the sequence is AKLESECDSSSHSDADLE. Positions 466 to 538 constitute a PAS domain; sequence LLDLENMAKL…QIFNELLAFG (73 aa).

This sequence belongs to the ERT1/acuK family.

The protein localises to the nucleus. In terms of biological role, transcription factor which regulates nonfermentable carbon utilization. Binds specifically to 5'-CGGN(8)CGG-3' and 5'-CGGN(9)CGG-3' sequences in the promoter region. The chain is Glucose starvation modulator protein 1 (GSM1) from Saccharomyces cerevisiae (strain RM11-1a) (Baker's yeast).